The sequence spans 136 residues: Large ribosomal subunit protein bL17 (136 aa).

It belongs to the bacterial ribosomal protein bL17 family. Part of the 50S ribosomal subunit. Contacts protein L32.

In Rhodopseudomonas palustris (strain BisA53), this protein is Large ribosomal subunit protein bL17.